Consider the following 1163-residue polypeptide: Protein phosphatase 1 regulatory subunit 26 (1163 aa).

A compositionally biased stretch (basic and acidic residues) spans 65 to 83; the sequence is HERLTQRGQRAERSRDTRL. 7 disordered regions span residues 65–91, 144–253, 266–393, 463–496, 514–653, 672–929, and 1073–1163; these read HERL…AVCK, RGGA…TSAR, RKPP…KKKL, APME…NIDS, VGSP…DEDL, RDPR…TATA, and TQPG…GLKL. Polar residues-rich tracts occupy residues 163–179 and 189–201; these read HSST…TPGS and DQGS…MSSE. The segment covering 208–236 has biased composition (basic and acidic residues); it reads IRAEIEQFLNEKRQHENPKCDGFVDKKSD. Residues 273 to 297 show a composition bias toward polar residues; that stretch reads KMSTQQRNFQPKPTTEPETPVSTKL. Positions 315 to 324 are enriched in basic residues; that stretch reads MPARRSKRIR. The segment covering 515–535 has biased composition (low complexity); it reads GSPQPAQGPLSSPGPSGQPGI. Composition is skewed to basic and acidic residues over residues 566–581 and 634–645; these read KIRE…DHIQ and ATEKESSEDKSS. Basic residues predominate over residues 672–682; the sequence is RDPRASCKKVR. A compositionally biased stretch (low complexity) spans 766 to 780; the sequence is TGASGHPPSASSPTS. Acidic residues predominate over residues 783–792; the sequence is SAVDSDDSIE. Composition is skewed to basic and acidic residues over residues 793 to 808 and 850 to 859; these read LEIR…ESIR and EGRRGPERAR. The segment covering 860–871 has biased composition (polar residues); sequence TQATGLLSQSGK. Low complexity predominate over residues 901–910; it reads SSAKASPPSR. Positions 1105 to 1131 are enriched in basic and acidic residues; the sequence is QQDRRNSASEDKVLDLRYRHRVDREPQ. Ser1111 carries the phosphoserine modification. Composition is skewed to polar residues over residues 1133–1146 and 1154–1163; these read QETL…FSDT and ATVSSKGLKL.

Interacts with UTP20 and PPP1CA.

Its subcellular location is the nucleus. It is found in the nucleolus. Its function is as follows. Inhibits phosphatase activity of protein phosphatase 1 (PP1) complexes. May positively regulate cell proliferation. This Mus musculus (Mouse) protein is Protein phosphatase 1 regulatory subunit 26 (Ppp1r26).